A 154-amino-acid chain; its full sequence is Large ribosomal subunit protein uL30 (154 aa).

The protein belongs to the universal ribosomal protein uL30 family. Part of the 50S ribosomal subunit.

The polypeptide is Large ribosomal subunit protein uL30 (Methanococcus maripaludis (strain C5 / ATCC BAA-1333)).